The chain runs to 485 residues: Pyruvate kinase (485 aa).

Arginine 33 contacts substrate. K(+) contacts are provided by asparagine 35, serine 37, aspartate 67, and threonine 68. Residue 35–38 (NFSH) coordinates ATP. ATP is bound by residues arginine 74 and lysine 155. Glutamate 221 contributes to the Mg(2+) binding site. Substrate-binding residues include glycine 244, aspartate 245, and threonine 277. Mg(2+) is bound at residue aspartate 245.

The protein belongs to the pyruvate kinase family. In terms of assembly, homotetramer. Mg(2+) serves as cofactor. Requires K(+) as cofactor.

It catalyses the reaction pyruvate + ATP = phosphoenolpyruvate + ADP + H(+). The protein operates within carbohydrate degradation; glycolysis; pyruvate from D-glyceraldehyde 3-phosphate: step 5/5. In Chlamydia trachomatis serovar L2 (strain ATCC VR-902B / DSM 19102 / 434/Bu), this protein is Pyruvate kinase (pyk).